A 156-amino-acid chain; its full sequence is D-aminoacyl-tRNA deacylase (156 aa).

The short motif at glycine 139–proline 140 is the Gly-cisPro motif, important for rejection of L-amino acids element.

The protein belongs to the DTD family. In terms of assembly, homodimer.

It localises to the cytoplasm. The enzyme catalyses glycyl-tRNA(Ala) + H2O = tRNA(Ala) + glycine + H(+). The catalysed reaction is a D-aminoacyl-tRNA + H2O = a tRNA + a D-alpha-amino acid + H(+). In terms of biological role, an aminoacyl-tRNA editing enzyme that deacylates mischarged D-aminoacyl-tRNAs. Also deacylates mischarged glycyl-tRNA(Ala), protecting cells against glycine mischarging by AlaRS. Acts via tRNA-based rather than protein-based catalysis; rejects L-amino acids rather than detecting D-amino acids in the active site. By recycling D-aminoacyl-tRNA to D-amino acids and free tRNA molecules, this enzyme counteracts the toxicity associated with the formation of D-aminoacyl-tRNA entities in vivo and helps enforce protein L-homochirality. This is D-aminoacyl-tRNA deacylase from Marinobacter nauticus (strain ATCC 700491 / DSM 11845 / VT8) (Marinobacter aquaeolei).